A 73-amino-acid polypeptide reads, in one-letter code: MILDKTLFSSLTFSLTVLFLLLLIPNLKGFGKLSAIIGGFIALIFQYFGYPSLGILFAGILSPIIILKIKSVK.

The next 2 helical transmembrane spans lie at 7–27 (LFSSLTFSLTVLFLLLLIPNL) and 47–67 (YFGYPSLGILFAGILSPIIIL).

Its subcellular location is the cell membrane. This is an uncharacterized protein from Methanocaldococcus jannaschii (strain ATCC 43067 / DSM 2661 / JAL-1 / JCM 10045 / NBRC 100440) (Methanococcus jannaschii).